Consider the following 382-residue polypeptide: uncharacterized protein (382 aa).

10 consecutive transmembrane segments (helical) span residues 8 to 28 (VLLL…LNTL), 41 to 61 (WQVG…TLIA), 73 to 93 (SYHC…LTVD), 94 to 114 (FWSW…IWVI), 133 to 153 (AAYM…LGIV), 157 to 177 (LLSV…PLLF), 208 to 228 (GCII…LYLS), 274 to 294 (VVIL…ALFI), 325 to 345 (ALLM…SLLM), and 349 to 369 (SDNL…MMLL).

The protein belongs to the major facilitator superfamily. YcaD (TC 2.A.1.26) family.

It localises to the cell inner membrane. This is an uncharacterized protein from Yersinia pseudotuberculosis serotype O:3 (strain YPIII).